The sequence spans 229 residues: Uracil-DNA glycosylase (229 aa).

D70 serves as the catalytic Proton acceptor.

It belongs to the uracil-DNA glycosylase (UDG) superfamily. UNG family.

Its subcellular location is the cytoplasm. The enzyme catalyses Hydrolyzes single-stranded DNA or mismatched double-stranded DNA and polynucleotides, releasing free uracil.. Its function is as follows. Excises uracil residues from the DNA which can arise as a result of misincorporation of dUMP residues by DNA polymerase or due to deamination of cytosine. In Chlamydia abortus (strain DSM 27085 / S26/3) (Chlamydophila abortus), this protein is Uracil-DNA glycosylase.